The chain runs to 160 residues: Ribosomal RNA large subunit methyltransferase H (160 aa).

Positions 76 and 108 each coordinate S-adenosyl-L-methionine.

It belongs to the RNA methyltransferase RlmH family. In terms of assembly, homodimer.

It localises to the cytoplasm. It carries out the reaction pseudouridine(1915) in 23S rRNA + S-adenosyl-L-methionine = N(3)-methylpseudouridine(1915) in 23S rRNA + S-adenosyl-L-homocysteine + H(+). In terms of biological role, specifically methylates the pseudouridine at position 1915 (m3Psi1915) in 23S rRNA. The sequence is that of Ribosomal RNA large subunit methyltransferase H from Rhodopseudomonas palustris (strain ATCC BAA-98 / CGA009).